We begin with the raw amino-acid sequence, 580 residues long: Zinc finger CCCH domain-containing protein 47 (580 aa).

2 ANK repeats span residues 72 to 102 (EERT…DVNR) and 107 to 139 (ERVT…LVNS). 2 consecutive C3H1-type zinc fingers follow at residues 251-278 (PYTC…HGVF) and 286-310 (QYKT…HKRE). Residues 421–451 (YVSSPSRNSQMGQNMNQHYPSSPVRQPPSQH) form a disordered region.

In terms of tissue distribution, expressed in roots and anthers.

The protein resides in the nucleus. In terms of biological role, involved in salt stress response. May positively modulate plant tolerance to salt stress. This is Zinc finger CCCH domain-containing protein 47 from Arabidopsis thaliana (Mouse-ear cress).